A 182-amino-acid chain; its full sequence is Large ribosomal subunit protein uL6 (182 aa).

Belongs to the universal ribosomal protein uL6 family. In terms of assembly, part of the 50S ribosomal subunit.

Functionally, this protein binds to the 23S rRNA, and is important in its secondary structure. It is located near the subunit interface in the base of the L7/L12 stalk, and near the tRNA binding site of the peptidyltransferase center. In Desulforamulus reducens (strain ATCC BAA-1160 / DSM 100696 / MI-1) (Desulfotomaculum reducens), this protein is Large ribosomal subunit protein uL6.